We begin with the raw amino-acid sequence, 274 residues long: Putative deoxyribonuclease TATDN1 homolog (274 aa).

Residues Glu105, His139, His162, and Asp208 each contribute to the a divalent metal cation site.

It belongs to the metallo-dependent hydrolases superfamily. TatD-type hydrolase family. Requires a divalent metal cation as cofactor.

It localises to the nucleus. Putative deoxyribonuclease. This is Putative deoxyribonuclease TATDN1 homolog from Enterocytozoon bieneusi (strain H348) (Microsporidian parasite).